The primary structure comprises 481 residues: p-aminobenzoyl-glutamate hydrolase subunit B (481 aa).

In terms of assembly, forms a heterodimer with AbgA. Requires Mn(2+) as cofactor.

In terms of biological role, component of the p-aminobenzoyl-glutamate hydrolase multicomponent enzyme system which catalyzes the cleavage of p-aminobenzoyl-glutamate (PABA-GLU) to form p-aminobenzoate (PABA) and glutamate. AbgAB does not degrade dipeptides and the physiological role of abgABT should be clarified. In Escherichia coli (strain K12), this protein is p-aminobenzoyl-glutamate hydrolase subunit B (abgB).